Reading from the N-terminus, the 157-residue chain is Putative electron transport protein YsaA (157 aa).

4Fe-4S ferredoxin-type domains lie at 2–32, 48–80, 80–109, and 112–144; these read NRFI…NQDC, KDHC…REHG, GHIF…VVSS, and KARA…CMDV. [4Fe-4S] cluster contacts are provided by Cys-12, Cys-15, Cys-18, Cys-22, Cys-58, Cys-61, Cys-66, Cys-70, Cys-89, Cys-92, Cys-95, Cys-99, Cys-118, Cys-121, Cys-130, and Cys-134.

The sequence is that of Putative electron transport protein YsaA (ysaA) from Escherichia coli (strain K12).